Consider the following 145-residue polypeptide: D-aminoacyl-tRNA deacylase (145 aa).

Residues 137–138 (GP) carry the Gly-cisPro motif, important for rejection of L-amino acids motif.

This sequence belongs to the DTD family. In terms of assembly, homodimer.

The protein resides in the cytoplasm. It catalyses the reaction glycyl-tRNA(Ala) + H2O = tRNA(Ala) + glycine + H(+). The catalysed reaction is a D-aminoacyl-tRNA + H2O = a tRNA + a D-alpha-amino acid + H(+). Its function is as follows. An aminoacyl-tRNA editing enzyme that deacylates mischarged D-aminoacyl-tRNAs. Also deacylates mischarged glycyl-tRNA(Ala), protecting cells against glycine mischarging by AlaRS. Acts via tRNA-based rather than protein-based catalysis; rejects L-amino acids rather than detecting D-amino acids in the active site. By recycling D-aminoacyl-tRNA to D-amino acids and free tRNA molecules, this enzyme counteracts the toxicity associated with the formation of D-aminoacyl-tRNA entities in vivo and helps enforce protein L-homochirality. The chain is D-aminoacyl-tRNA deacylase from Chromohalobacter salexigens (strain ATCC BAA-138 / DSM 3043 / CIP 106854 / NCIMB 13768 / 1H11).